The following is a 1298-amino-acid chain: Phosphoribosylformylglycinamidine synthase (1298 aa).

The segment at 303–327 (FPGAATGSGGEIRDEGATGRGAKPK) is disordered. Residues 305 to 316 (GAATGSGGEIRD), 384 to 386 (TGY), and Ala-676 each bind ATP. Residues Asp-677, Glu-716, Asn-720, and Asp-884 each coordinate Mg(2+). Residue Ser-886 coordinates ATP. One can recognise a Glutamine amidotransferase type-1 domain in the interval 1045 to 1298 (VAVLREQGVN…MFRNARAWVN (254 aa)). Residue Cys-1138 is the Nucleophile of the active site. Catalysis depends on residues His-1263 and Glu-1265.

The protein in the N-terminal section; belongs to the FGAMS family. As to quaternary structure, monomer.

The protein resides in the cytoplasm. It carries out the reaction N(2)-formyl-N(1)-(5-phospho-beta-D-ribosyl)glycinamide + L-glutamine + ATP + H2O = 2-formamido-N(1)-(5-O-phospho-beta-D-ribosyl)acetamidine + L-glutamate + ADP + phosphate + H(+). It functions in the pathway purine metabolism; IMP biosynthesis via de novo pathway; 5-amino-1-(5-phospho-D-ribosyl)imidazole from N(2)-formyl-N(1)-(5-phospho-D-ribosyl)glycinamide: step 1/2. In terms of biological role, phosphoribosylformylglycinamidine synthase involved in the purines biosynthetic pathway. Catalyzes the ATP-dependent conversion of formylglycinamide ribonucleotide (FGAR) and glutamine to yield formylglycinamidine ribonucleotide (FGAM) and glutamate. In Pseudomonas syringae pv. syringae (strain B728a), this protein is Phosphoribosylformylglycinamidine synthase.